The sequence spans 197 residues: Imidazoleglycerol-phosphate dehydratase (197 aa).

Belongs to the imidazoleglycerol-phosphate dehydratase family.

Its subcellular location is the cytoplasm. The catalysed reaction is D-erythro-1-(imidazol-4-yl)glycerol 3-phosphate = 3-(imidazol-4-yl)-2-oxopropyl phosphate + H2O. The protein operates within amino-acid biosynthesis; L-histidine biosynthesis; L-histidine from 5-phospho-alpha-D-ribose 1-diphosphate: step 6/9. The protein is Imidazoleglycerol-phosphate dehydratase of Methylococcus capsulatus (strain ATCC 33009 / NCIMB 11132 / Bath).